The following is a 65-amino-acid chain: Conotoxin Am6.4 (65 aa).

Residues 1–33 are disordered; sequence STGKRNAGKLTVTDDVEADRDTDPDDKDPSVHN. Positions 1-36 are excised as a propeptide; that stretch reads STGKRNAGKLTVTDDVEADRDTDPDDKDPSVHNSWR. Residues 14 to 26 show a composition bias toward acidic residues; that stretch reads DDVEADRDTDPDD. Intrachain disulfides connect Cys40/Cys50, Cys45/Cys59, and Cys49/Cys64.

In terms of processing, is not hydroxylated. In terms of tissue distribution, expressed by the venom duct.

Its subcellular location is the secreted. In terms of biological role, probable toxin that inhibits ion channels. The polypeptide is Conotoxin Am6.4 (Conus amadis (Amadis cone)).